A 237-amino-acid chain; its full sequence is Golgi anti-apoptotic protein (237 aa).

At 1-37 (MAMPSLSACSSIEDDFNYGSSVASASVHIRMAFLRKV) the chain is on the cytoplasmic side. Residues 38–58 (YGILCLQFLLTTATTAVFLYF) form a helical membrane-spanning segment. At 59 to 67 (DCMRTFIQG) the chain is on the lumenal side. Residues 68–88 (SPVLILASMFGSIGLIFALTL) form a helical membrane-spanning segment. The Cytoplasmic segment spans residues 89–94 (HRHKHP). The helical transmembrane segment at 95–115 (LNLYLLCGFTLSESLTLASVV) threads the bilayer. A topological domain (lumenal) is located at residue threonine 116. The helical transmembrane segment at 117 to 137 (FYDVHVVMQAFMLTTAAFLAL) threads the bilayer. The Cytoplasmic portion of the chain corresponds to 138–151 (TTYTLQSKRDFSKL). A helical membrane pass occupies residues 152-172 (GAGLFAALWILILSGLLGIFV). Topologically, residues 173–174 (QN) are lumenal. Residues 175-195 (ETVKLVLSAFGALVFCGFIIY) form a helical membrane-spanning segment. Topologically, residues 196 to 209 (DTHSLIHKLSPEEY) are cytoplasmic. The helical intramembrane region spans 210–230 (VLASINLYLDIINLFLHLLQL). The Cytoplasmic portion of the chain corresponds to 231 to 237 (LEVSNKK).

Belongs to the BI1 family. LFG subfamily.

Its subcellular location is the host Golgi apparatus membrane. May affect virulence through inhibition of apoptosis. The chain is Golgi anti-apoptotic protein (L6) from Vaccinia virus (strain LC16m0) (VACV).